The following is a 465-amino-acid chain: A-type ATP synthase subunit B (465 aa).

The protein belongs to the ATPase alpha/beta chains family. Has multiple subunits with at least A(3), B(3), C, D, E, F, H, I and proteolipid K(x).

It is found in the cell membrane. Functionally, component of the A-type ATP synthase that produces ATP from ADP in the presence of a proton gradient across the membrane. The B chain is a regulatory subunit. This chain is A-type ATP synthase subunit B, found in Sulfurisphaera tokodaii (strain DSM 16993 / JCM 10545 / NBRC 100140 / 7) (Sulfolobus tokodaii).